Reading from the N-terminus, the 109-residue chain is Oncomodulin-1 (109 aa).

Residue serine 2 is modified to N-acetylserine. 2 EF-hand domains span residues 39–74 and 78–109; these read MSAN…FESG and LTES…MVHS. The Ca(2+) site is built by aspartate 52, aspartate 54, serine 56, tyrosine 58, glutamate 63, aspartate 91, aspartate 93, aspartate 95, lysine 97, and glutamate 102.

This sequence belongs to the parvalbumin family.

Its function is as follows. Has some calmodulin-like activity with respect to enzyme activation and growth regulation. Binds two calcium ions. The polypeptide is Oncomodulin-1 (OCM) (Homo sapiens (Human)).